The primary structure comprises 425 residues: Pyruvate dehydrogenase E1 component subunit alpha-3, chloroplastic (425 aa).

A chloroplast-targeting transit peptide spans 1–66 (MAAASSFTAA…VLPGNKAAPA (66 aa)). Residues histidine 109, tyrosine 135, arginine 136, alanine 184, isoleucine 186, aspartate 224, glycine 225, and asparagine 253 each contribute to the pyruvate site. Residues tyrosine 135, arginine 136, alanine 184, isoleucine 186, aspartate 224, glycine 225, asparagine 253, and histidine 322 each contribute to the thiamine diphosphate site. Residue aspartate 224 coordinates Mg(2+). Asparagine 253 serves as a coordination point for Mg(2+).

In terms of assembly, tetramer of 2 alpha and 2 beta subunits. Thiamine diphosphate serves as cofactor. Requires Mg(2+) as cofactor.

Its subcellular location is the plastid. It is found in the chloroplast. It carries out the reaction N(6)-[(R)-lipoyl]-L-lysyl-[protein] + pyruvate + H(+) = N(6)-[(R)-S(8)-acetyldihydrolipoyl]-L-lysyl-[protein] + CO2. Functionally, the pyruvate dehydrogenase complex catalyzes the overall conversion of pyruvate to acetyl-CoA and CO(2). It contains multiple copies of three enzymatic components: pyruvate dehydrogenase (E1), dihydrolipoamide acetyltransferase (E2) and lipoamide dehydrogenase (E3). The polypeptide is Pyruvate dehydrogenase E1 component subunit alpha-3, chloroplastic (Oryza sativa subsp. japonica (Rice)).